The primary structure comprises 494 residues: Tyrosinase (494 aa).

Positions 38, 53, 64, 224, 228, and 256 each coordinate Cu cation.

Belongs to the tyrosinase family. Cu(2+) is required as a cofactor.

It carries out the reaction 2 L-dopa + O2 = 2 L-dopaquinone + 2 H2O. The enzyme catalyses L-tyrosine + O2 = L-dopaquinone + H2O. The sequence is that of Tyrosinase (mepA) from Rhizobium meliloti (Ensifer meliloti).